A 488-amino-acid polypeptide reads, in one-letter code: NADH-quinone oxidoreductase subunit N 2 (488 aa).

Transmembrane regions (helical) follow at residues 18–38, 45–65, 81–101, 110–130, 135–155, 169–189, 210–230, 242–262, 274–294, 308–328, 331–351, 375–395, 412–434, and 458–478; these read FLPE…ELFI, LVLN…LLIP, PLAV…LPFA, SFYG…FVLA, LIIL…LTAL, YLIL…FMYI, LVLG…AVPF, PTPV…IPLV, LVWT…GNLV, SSIA…VIGM, VIYF…VLAL, IAFA…TVGF, WLAF…LVVV, and FALT…WFLI.

Belongs to the complex I subunit 2 family. In terms of assembly, NDH-1 is composed of 14 different subunits. Subunits NuoA, H, J, K, L, M, N constitute the membrane sector of the complex.

Its subcellular location is the cell inner membrane. It carries out the reaction a quinone + NADH + 5 H(+)(in) = a quinol + NAD(+) + 4 H(+)(out). In terms of biological role, NDH-1 shuttles electrons from NADH, via FMN and iron-sulfur (Fe-S) centers, to quinones in the respiratory chain. The immediate electron acceptor for the enzyme in this species is believed to be ubiquinone. Couples the redox reaction to proton translocation (for every two electrons transferred, four hydrogen ions are translocated across the cytoplasmic membrane), and thus conserves the redox energy in a proton gradient. The polypeptide is NADH-quinone oxidoreductase subunit N 2 (Aquifex aeolicus (strain VF5)).